We begin with the raw amino-acid sequence, 457 residues long: 11S globulin seed storage protein Ana o 2.0101 (457 aa).

An N-terminal signal peptide occupies residues 1-14 (LSVCFLILFHGCLA). The interval 15-29 (SRQEWQQQDECQIDR) is igE-binding. 2 disulfide bridges follow: C25–C58 and C101–C278. Conformational epitope; mouse monoclonal antibody (mAb) 2B5-binding regions lie at residues 29-37 (RLDALEPDN) and 31-48 (DALE…TVEA). The Cupin type-1 1 domain occupies 30–220 (LDALEPDNRV…AFQVDERLIK (191 aa)). Binds goat polyclonal antibodies (pAbs) stretches follow at residues 32–45 (ALEP…EAGT) and 55–86 (QFRC…QLIY). Residues 34 to 57 (EPDNRVEYEAGTVEAWDPNHEQFR) are mouse monoclonal antibody (mAb) 2B5-binding. The mouse monoclonal antibody (mAb) 4H9-binding stretch occupies residues 41–55 (YEAGTVEAWDPNHEQ). Residues 105–119 (YQAPQQGRQQGQSGR) are igE-binding. The binds goat polyclonal antibodies (pAbs) stretch occupies residues 215-239 (DERLIKQLKSEDNRGGIVKVKDDEL). The segment at 233-252 (KVKDDELRVIRPSRSQSERG) is CD4(+) T cell-reactive epitope. Residues 243 to 270 (RPSRSQSERGSESEEESEDEKRRWGQRD) form a disordered region. Basic and acidic residues predominate over residues 261-270 (DEKRRWGQRD). Positions 265–289 (RWGQRDNGIEETICTMRLKENINDP) are linear epitope; mouse monoclonal antibody (mAb) 1F5-binding. The NGXEET; peptidase recognition motif signature appears at 271–276 (NGIEET). The region spanning 284–433 (ENINDPARAD…AFQISREDAR (150 aa)) is the Cupin type-1 2 domain. CD4(+) T cell-reactive epitope stretches follow at residues 289–308 (PARA…LNSL), 297–316 (PEVG…LKWL), 321–340 (EKGV…LNSH), 329–348 (ALVL…GCKG), and 377–396 (QNFA…ISFK). Residues 395–416 (FKTNDRAMTSPLAGRTSVLGGM) are binds goat polyclonal antibodies (pAbs), but buried in the 3D-structure model.

The protein belongs to the 11S seed storage protein (globulins) family. As to quaternary structure, homotrimer. Hexamer. Each subunit is composed of an acidic and a basic chain derived from a single precursor and linked by a disulfide bond. Post-translationally, proteolytically processed from a single precursor to produce an acidic and a basic chain that are linked by a disulfide bond. Not glycosylated. Expressed in seed (at protein level). Expressed in the juice of the cashew apple (at protein level).

Functionally, seed storage protein. This chain is 11S globulin seed storage protein Ana o 2.0101, found in Anacardium occidentale (Cashew).